The primary structure comprises 318 residues: Beta-sarcoglycan (318 aa).

Residues 1 to 32 (MAAAAAAAAEQQSSNGPVKKSMREKAVERRSV) are disordered. Residues 1-65 (MAAAAAAAAE…GLRGRKGNLA (65 aa)) are Cytoplasmic-facing. Residues 21–32 (SMREKAVERRSV) show a composition bias toward basic and acidic residues. Residues 66 to 86 (ICVIILLFILAVINLIITLVI) traverse the membrane as a helical; Signal-anchor for type II membrane protein segment. Topologically, residues 87-318 (WAVIRIGPNG…ISDNPCGNTH (232 aa)) are extracellular. Asn-158, Asn-211, and Asn-258 each carry an N-linked (GlcNAc...) asparagine glycan. 2 disulfides stabilise this stretch: Cys-288–Cys-314 and Cys-290–Cys-307.

This sequence belongs to the sarcoglycan beta/delta/gamma/zeta family. In terms of assembly, cross-link to form 2 major subcomplexes: one consisting of SGCB, SGCD and SGCG and the other consisting of SGCB and SGCD. The association between SGCB and SGCG is particularly strong while SGCA is loosely associated with the other sarcoglycans. Disulfide bonds are present. Highest expression in heart and skeletal muscle. Low expression in brain, kidney, placenta, pancreas and lung. High expression in fetal brain. Also found in fetal lung, kidney and liver.

It is found in the cell membrane. Its subcellular location is the sarcolemma. The protein localises to the cytoplasm. It localises to the cytoskeleton. Component of the sarcoglycan complex, a subcomplex of the dystrophin-glycoprotein complex which forms a link between the F-actin cytoskeleton and the extracellular matrix. The protein is Beta-sarcoglycan (SGCB) of Homo sapiens (Human).